We begin with the raw amino-acid sequence, 265 residues long: Cytochrome c oxidase subunit 3 (265 aa).

Helical transmembrane passes span 16–36 (PWPI…VMYM), 41–61 (GGAT…FVWW), 84–104 (YGSI…FWAS), 162–182 (AVYA…FQGM), 200–220 (FFLA…FLIV), and 245–265 (WHFV…WGGI).

It belongs to the cytochrome c oxidase subunit 3 family. Component of the cytochrome c oxidase (complex IV, CIV), a multisubunit enzyme composed of a catalytic core of 3 subunits and several supernumerary subunits. The complex exists as a monomer or a dimer and forms supercomplexes (SCs) in the inner mitochondrial membrane with ubiquinol-cytochrome c oxidoreductase (cytochrome b-c1 complex, complex III, CIII).

It is found in the mitochondrion inner membrane. It catalyses the reaction 4 Fe(II)-[cytochrome c] + O2 + 8 H(+)(in) = 4 Fe(III)-[cytochrome c] + 2 H2O + 4 H(+)(out). In terms of biological role, component of the cytochrome c oxidase, the last enzyme in the mitochondrial electron transport chain which drives oxidative phosphorylation. The respiratory chain contains 3 multisubunit complexes succinate dehydrogenase (complex II, CII), ubiquinol-cytochrome c oxidoreductase (cytochrome b-c1 complex, complex III, CIII) and cytochrome c oxidase (complex IV, CIV), that cooperate to transfer electrons derived from NADH and succinate to molecular oxygen, creating an electrochemical gradient over the inner membrane that drives transmembrane transport and the ATP synthase. Cytochrome c oxidase is the component of the respiratory chain that catalyzes the reduction of oxygen to water. Electrons originating from reduced cytochrome c in the intermembrane space (IMS) are transferred via the dinuclear copper A center (CU(A)) of subunit 2 and heme A of subunit 1 to the active site in subunit 1, a binuclear center (BNC) formed by heme A3 and copper B (CU(B)). The BNC reduces molecular oxygen to 2 water molecules using 4 electrons from cytochrome c in the IMS and 4 protons from the mitochondrial matrix. The polypeptide is Cytochrome c oxidase subunit 3 (COX3) (Aegilops columnaris (Goatgrass)).